The primary structure comprises 106 residues: uncharacterized protein (106 aa).

The protein localises to the mitochondrion. This is an uncharacterized protein from Arabidopsis thaliana (Mouse-ear cress).